A 1486-amino-acid polypeptide reads, in one-letter code: Chromosome partition protein MukB (1486 aa).

Gly34 to Ser41 contributes to the ATP binding site. Coiled coils occupy residues Leu326 to Gln418, Leu444 to Gln480, and Arg509 to Val603. The interval Pro666–Arg783 is flexible hinge. Coiled-coil stretches lie at residues Glu835–Glu923, Glu977–Ala1115, and Val1209–Ser1266.

Belongs to the SMC family. MukB subfamily. As to quaternary structure, homodimerization via its hinge domain. Binds to DNA via its C-terminal region. Interacts, and probably forms a ternary complex, with MukE and MukF via its C-terminal region. The complex formation is stimulated by calcium or magnesium. Interacts with tubulin-related protein FtsZ.

It is found in the cytoplasm. Its subcellular location is the nucleoid. Functionally, plays a central role in chromosome condensation, segregation and cell cycle progression. Functions as a homodimer, which is essential for chromosome partition. Involved in negative DNA supercoiling in vivo, and by this means organize and compact chromosomes. May achieve or facilitate chromosome segregation by condensation DNA from both sides of a centrally located replisome during cell division. The sequence is that of Chromosome partition protein MukB from Escherichia coli O127:H6 (strain E2348/69 / EPEC).